A 267-amino-acid polypeptide reads, in one-letter code: B3 domain-containing protein At3g11580 (267 aa).

The segment at residues 29 to 143 (FEKSLTPSDV…RLFIGWRRRG (115 aa)) is a DNA-binding region (TF-B3).

It localises to the nucleus. In Arabidopsis thaliana (Mouse-ear cress), this protein is B3 domain-containing protein At3g11580 (ARF32).